Here is a 448-residue protein sequence, read N- to C-terminus: Solute carrier family 52, riboflavin transporter, member 2 (448 aa).

5 consecutive transmembrane segments (helical) span residues 14–34 (LLVA…WVEL), 47–67 (LPSY…VVTL), 79–99 (VPIQ…APLW), 105–125 (VAGQ…ALAC), and 147–167 (FFLG…VQGV). Residue N178 is glycosylated (N-linked (GlcNAc...) asparagine). A helical transmembrane segment spans residues 198-218 (WALTALLVTSAAAFQGLLLLL). Residues 228-267 (GAGPELPLGSPGAEEEEKEEEEALPLQEPPSQAAGTIPGP) form a disordered region. Acidic residues predominate over residues 240–250 (AEEEEKEEEEA). 5 helical membrane passes run 280 to 300 (AFLL…LPAV), 315 to 335 (LAVV…MGVL), 342 to 362 (LVGL…LAIL), 369 to 389 (VGTT…LCVF), and 407 to 427 (ALLA…GTMF).

This sequence belongs to the riboflavin transporter family.

The protein localises to the cell membrane. The enzyme catalyses riboflavin(in) = riboflavin(out). Riboflavin transport is Na(+)-independent but moderately pH-sensitive. Activity is strongly inhibited by riboflavin analogs, such as lumiflavin. Weakly inhibited by flavin adenine dinucleotide (FAD) and flavin mononucleotide (FMN). Its function is as follows. Plasma membrane transporter mediating the uptake by cells of the water soluble vitamin B2/riboflavin that plays a key role in biochemical oxidation-reduction reactions of the carbohydrate, lipid, and amino acid metabolism. May also act as a receptor for 4-hydroxybutyrate. In terms of biological role, (Microbial infection) In case of infection by retroviruses, acts as a cell receptor to retroviral envelopes similar to the porcine endogenous retrovirus (PERV-A). The chain is Solute carrier family 52, riboflavin transporter, member 2 (SLC52A2) from Papio hamadryas (Hamadryas baboon).